The following is a 295-amino-acid chain: Indole-3-glycerol phosphate synthase (295 aa).

The protein belongs to the TrpC family.

It carries out the reaction 1-(2-carboxyphenylamino)-1-deoxy-D-ribulose 5-phosphate + H(+) = (1S,2R)-1-C-(indol-3-yl)glycerol 3-phosphate + CO2 + H2O. Its pathway is amino-acid biosynthesis; L-tryptophan biosynthesis; L-tryptophan from chorismate: step 4/5. The sequence is that of Indole-3-glycerol phosphate synthase from Prochlorococcus marinus (strain AS9601).